Reading from the N-terminus, the 119-residue chain is Dihydroneopterin aldolase (119 aa).

Substrate is bound by residues glutamate 21, tyrosine 53, and 72–73 (VE). The active-site Proton donor/acceptor is lysine 98.

It belongs to the DHNA family.

It catalyses the reaction 7,8-dihydroneopterin = 6-hydroxymethyl-7,8-dihydropterin + glycolaldehyde. The protein operates within cofactor biosynthesis; tetrahydrofolate biosynthesis; 2-amino-4-hydroxy-6-hydroxymethyl-7,8-dihydropteridine diphosphate from 7,8-dihydroneopterin triphosphate: step 3/4. Functionally, catalyzes the conversion of 7,8-dihydroneopterin to 6-hydroxymethyl-7,8-dihydropterin. In Streptomyces coelicolor (strain ATCC BAA-471 / A3(2) / M145), this protein is Dihydroneopterin aldolase (folB).